A 330-amino-acid polypeptide reads, in one-letter code: AH receptor-interacting protein (330 aa).

Positions 31 to 121 (GTKATFHFRT…KDPLEGQRHC (91 aa)) constitute a PPIase FKBP-type domain. The residue at position 43 (S43) is a Phosphoserine. TPR repeat units lie at residues 179–212 (VPLIHQEGNRLYREGQVKEAAAKYYDAIACLKNL), 231–264 (TPLLLNYCQCKLVAQEYYEVLDHCSSILNKYDDN), and 265–298 (VKAYFKRGKAHAAVWNAQEAQADFAKVLELDPAL).

As to quaternary structure, interacts with RET in the pituitary gland; this interaction prevents the formation of the AIP-survivin complex.

Its subcellular location is the cytoplasm. Functionally, may play a positive role in AHR-mediated (aromatic hydrocarbon receptor) signaling, possibly by influencing its receptivity for ligand and/or its nuclear targeting. This is AH receptor-interacting protein (Aip) from Rattus norvegicus (Rat).